The primary structure comprises 138 residues: Endoribonuclease YbeY (138 aa).

Residues H105, H109, and D115 each contribute to the Zn(2+) site.

Belongs to the endoribonuclease YbeY family. Requires Zn(2+) as cofactor.

It is found in the cytoplasm. Functionally, single strand-specific metallo-endoribonuclease involved in late-stage 70S ribosome quality control and in maturation of the 3' terminus of the 16S rRNA. The polypeptide is Endoribonuclease YbeY (Chlorobium phaeobacteroides (strain BS1)).